The sequence spans 122 residues: Large ribosomal subunit protein uL14c (122 aa).

It belongs to the universal ribosomal protein uL14 family. Part of the 50S ribosomal subunit.

The protein localises to the plastid. It is found in the chloroplast. In terms of biological role, binds to 23S rRNA. The polypeptide is Large ribosomal subunit protein uL14c (Oltmannsiellopsis viridis (Marine flagellate)).